The following is a 67-amino-acid chain: LPS-assembly lipoprotein LptM (67 aa).

An N-terminal signal peptide occupies residues 1 to 19; sequence MKNVFKALTVLLTLFSLTG. The N-palmitoyl cysteine moiety is linked to residue cysteine 20. A lipid anchor (S-diacylglycerol cysteine) is attached at cysteine 20. The tract at residues 26-67 is disordered; that stretch reads LYFPPADKNAPPPTKPVETQTQSTVPDKNDRATGDGPSQVNY. Positions 42–51 are enriched in polar residues; that stretch reads VETQTQSTVP.

Belongs to the LptM family. As to quaternary structure, interacts with the outer membrane embedded portion of the LPS translocon formed by LptD and LptE (LptDE).

The protein resides in the cell outer membrane. In terms of biological role, component of the lipopolysaccharide (LPS) transport (Lpt) pathway that promotes efficient assembly of the outer membrane LPS translocon (LptDE) by the BAM complex. Facilitates oxidative maturation of LptD by stabilizing a conformation of the LPS translocon in which LptD can efficiently acquire native disulfide bonds, thereby activating the LPS translocon. The polypeptide is LPS-assembly lipoprotein LptM (Escherichia coli O157:H7).